The primary structure comprises 632 residues: Polygalacturonase non-catalytic subunit AroGP3 (632 aa).

Residues 1–27 form the signal peptide; it reads MHTKILLPSCILLLLLFTLSSLDVVVA. Positions 28–109 are excised as a propeptide; it reads KDGDESGNPF…MCALDLLPSL (82 aa). N-linked (GlcNAc...) asparagine glycans are attached at residues Asn125, Asn143, Asn258, Asn280, Asn336, Asn371, and Asn389. The BURP domain occupies 417 to 631; the sequence is FFREKMLKSG…FENDMTWATA (215 aa).

In terms of assembly, interacts with polygalacturonase to form heterodimers.

The protein resides in the secreted. It is found in the extracellular space. The protein localises to the apoplast. Its subcellular location is the cell wall. Non-catalytic subunit of polygalacturonase. The sequence is that of Polygalacturonase non-catalytic subunit AroGP3 (GP3) from Solanum lycopersicum (Tomato).